A 927-amino-acid polypeptide reads, in one-letter code: Protein LONGIFOLIA 1 (927 aa).

Disordered regions lie at residues 41–198 (TGDE…EGRR), 210–257 (YDER…GHRR), 460–588 (AQKV…SDSN), and 605–626 (YERN…DLGM). A compositionally biased stretch (low complexity) spans 86 to 114 (SSESSSRLSFSSSPCSSSFSSADISTTAS). Over residues 115–125 (QFEQPGLSNGE) the composition is skewed to polar residues. The span at 146–165 (DIRELVRSSIHKETRTRDEE) shows a compositional bias: basic and acidic residues. Polar residues predominate over residues 182 to 193 (KESSPSRNSNEW). Positions 210–226 (YDERETRKTGAKLKETP) are enriched in basic and acidic residues. Over residues 232-245 (SRSNSFRSARSSCS) the composition is skewed to low complexity. Polar residues-rich tracts occupy residues 483 to 500 (QTES…QSKS) and 538 to 553 (NKNQ…TESA). 2 stretches are compositionally biased toward basic and acidic residues: residues 569–584 (SEDR…RSLR) and 605–616 (YERNSDITEQHT).

In terms of assembly, interacts (via C-terminus) with TON1A and TON1B. Expressed in roots, petioles, leaf blades and floral organs.

It localises to the nucleus. In association with LNG2, regulates leaf morphology by promoting longitudinal polar cell elongation independently of ROT3. The chain is Protein LONGIFOLIA 1 (LNG1) from Arabidopsis thaliana (Mouse-ear cress).